The sequence spans 265 residues: U6 snRNA phosphodiesterase 1 (265 aa).

The interval 1–22 (MSLVCYESSSSGEDDDETISDN) is disordered. His109 (proton acceptor) is an active-site residue. AMP is bound by residues 109-111 (HLS) and 195-201 (DFLLHIS). Residue 197-201 (LLHIS) participates in UMP binding. His199 functions as the Proton donor in the catalytic mechanism.

It belongs to the 2H phosphoesterase superfamily. USB1 family.

It localises to the nucleus. The catalysed reaction is a 3'-end uridylyl-uridine-RNA = a 3'-end 2',3'-cyclophospho-uridine-RNA + uridine. In terms of biological role, 3'-5' RNA exonuclease that trims the 3' end of oligo(U) tracts of the pre-U6 small nuclear RNA (snRNA) molecule, leading to the formation of a U6 snRNA 3' end-terminated with a 2',3'-cyclic phosphate.d. Participates in the U6 snRNA 3' end processing that prevents U6 snRNA degradation. The sequence is that of U6 snRNA phosphodiesterase 1 from Schizosaccharomyces pombe (strain 972 / ATCC 24843) (Fission yeast).